The primary structure comprises 282 residues: Protein-glutamine deamidase Cif (282 aa).

Positions 1–16 are translocation domain (TD); that stretch reads MKDITLPPPTSASCLT. Active-site residues include C109, H165, and Q185.

This sequence belongs to the Cif family.

It is found in the secreted. It localises to the host nucleus. The catalysed reaction is L-glutaminyl-[protein] + H2O = L-glutamyl-[protein] + NH4(+). Protein-glutamine deamidase effector that inhibits the host cell cycle and other key cellular processes such as the actin network and programmed-cell death. Acts by mediating the side chain deamidation of 'Gln-40' of host NEDD8, converting it to glutamate, thereby abolishing the activity of cullin-RING-based E3 ubiquitin-protein ligase complexes (CRL complexes). Inactivation of CRL complexes prevents ubiquitination and subsequent degradation of the cyclin-dependent kinase inhibitors CDKN1A/p21 and CDKN1B/p27, leading to G1 and G2 cell cycle arrests in host cells. Also able to catalyze deamidation of 'Gln-40' of host ubiquitin in vitro; however, NEDD8 constitutes the preferred substrate in vivo. This Escherichia coli protein is Protein-glutamine deamidase Cif.